Consider the following 325-residue polypeptide: Malate dehydrogenase (325 aa).

11–17 (GAAGQIA) contributes to the NAD(+) binding site. Substrate contacts are provided by arginine 92 and arginine 98. NAD(+)-binding positions include asparagine 105, glutamine 112, and 129–131 (VGN). Substrate-binding residues include asparagine 131 and arginine 162. The Proton acceptor role is filled by histidine 187.

The protein belongs to the LDH/MDH superfamily. MDH type 2 family.

It catalyses the reaction (S)-malate + NAD(+) = oxaloacetate + NADH + H(+). Functionally, catalyzes the reversible oxidation of malate to oxaloacetate. The chain is Malate dehydrogenase from Methylococcus capsulatus (strain ATCC 33009 / NCIMB 11132 / Bath).